Here is a 416-residue protein sequence, read N- to C-terminus: Tyrosine--tRNA ligase (416 aa).

Tyrosine 37 contacts L-tyrosine. The short motif at 42–51 is the 'HIGH' region element; that stretch reads PTADSLHVGN. Residues tyrosine 176 and glutamine 180 each coordinate L-tyrosine. The 'KMSKS' region signature appears at 236 to 240; the sequence is KMGKS. Position 239 (lysine 239) interacts with ATP. The S4 RNA-binding domain maps to 350-416; sequence LPAFRVFQEA…KKKHILLRPV (67 aa).

The protein belongs to the class-I aminoacyl-tRNA synthetase family. TyrS type 1 subfamily. Homodimer.

Its subcellular location is the cytoplasm. It catalyses the reaction tRNA(Tyr) + L-tyrosine + ATP = L-tyrosyl-tRNA(Tyr) + AMP + diphosphate + H(+). Functionally, catalyzes the attachment of tyrosine to tRNA(Tyr) in a two-step reaction: tyrosine is first activated by ATP to form Tyr-AMP and then transferred to the acceptor end of tRNA(Tyr). This chain is Tyrosine--tRNA ligase, found in Gluconobacter oxydans (strain 621H) (Gluconobacter suboxydans).